An 865-amino-acid polypeptide reads, in one-letter code: Alanine--tRNA ligase (865 aa).

4 residues coordinate Zn(2+): His554, His558, Cys656, and His660.

Belongs to the class-II aminoacyl-tRNA synthetase family. The cofactor is Zn(2+).

Its subcellular location is the cytoplasm. It carries out the reaction tRNA(Ala) + L-alanine + ATP = L-alanyl-tRNA(Ala) + AMP + diphosphate. Catalyzes the attachment of alanine to tRNA(Ala) in a two-step reaction: alanine is first activated by ATP to form Ala-AMP and then transferred to the acceptor end of tRNA(Ala). Also edits incorrectly charged Ser-tRNA(Ala) and Gly-tRNA(Ala) via its editing domain. The polypeptide is Alanine--tRNA ligase (Francisella tularensis subsp. novicida (strain U112)).